The primary structure comprises 538 residues: NAD(P)H-quinone oxidoreductase chain 4 (538 aa).

The next 14 helical transmembrane spans lie at 11-31 (FPWL…VPFI), 43-63 (YALI…FKGF), 95-115 (MPLI…AWPV), 119-139 (PKLF…VFAV), 143-163 (LLFF…LAIW), 175-195 (FIIY…AMGF), 217-237 (GFQL…LPIV), 251-271 (TAPV…YALL), 285-305 (FAPL…LTSF), 314-334 (IAYS…SFSS), 340-360 (AMLQ…LVGA), 382-404 (IMFA…SGFI), 425-445 (IVVA…LLSM), and 472-492 (IYII…PKIM).

The protein belongs to the complex I subunit 4 family.

The protein resides in the cellular thylakoid membrane. It carries out the reaction a plastoquinone + NADH + (n+1) H(+)(in) = a plastoquinol + NAD(+) + n H(+)(out). It catalyses the reaction a plastoquinone + NADPH + (n+1) H(+)(in) = a plastoquinol + NADP(+) + n H(+)(out). Functionally, NDH-1 shuttles electrons from NAD(P)H, via FMN and iron-sulfur (Fe-S) centers, to quinones in the respiratory chain. The immediate electron acceptor for the enzyme in this species is believed to be plastoquinone. Couples the redox reaction to proton translocation (for every two electrons transferred, four hydrogen ions are translocated across the cytoplasmic membrane), and thus conserves the redox energy in a proton gradient. This is NAD(P)H-quinone oxidoreductase chain 4 from Prochlorococcus marinus (strain NATL1A).